The chain runs to 86 residues: Small ribosomal subunit protein uS15 (86 aa).

The interval 1–22 (MSVDTQKVIEDNKRSAQDTGSP) is disordered. The segment covering 7-16 (KVIEDNKRSA) has biased composition (basic and acidic residues).

The protein belongs to the universal ribosomal protein uS15 family. Part of the 30S ribosomal subunit. Forms a bridge to the 50S subunit in the 70S ribosome, contacting the 23S rRNA.

Functionally, one of the primary rRNA binding proteins, it binds directly to 16S rRNA where it helps nucleate assembly of the platform of the 30S subunit by binding and bridging several RNA helices of the 16S rRNA. Its function is as follows. Forms an intersubunit bridge (bridge B4) with the 23S rRNA of the 50S subunit in the ribosome. The protein is Small ribosomal subunit protein uS15 of Xanthomonas campestris pv. campestris (strain 8004).